Here is a 299-residue protein sequence, read N- to C-terminus: CCR4-NOT transcription complex subunit 9 (299 aa).

M1 is subject to N-acetylmethionine.

Belongs to the CNOT9 family. Homodimer. Component of the CCR4-NOT complex; distinct complexes seem to exist that differ in the participation of probably mutually exclusive catalytic subunits. Interacts with MYB, ATF2, RARA, RARB, RARG, RXRA, RXRB and RXRG. Identified in a complex with ATF2 bound to target DNA. Interacts with NANOS2. Directly interacts with ZNF335. Detected in spleen, thymus, prostate, testis, ovary and intestine.

It is found in the nucleus. Its subcellular location is the cytoplasm. It localises to the P-body. Its function is as follows. Component of the CCR4-NOT complex which is one of the major cellular mRNA deadenylases and is linked to various cellular processes including bulk mRNA degradation, miRNA-mediated repression, translational repression during translational initiation and general transcription regulation. Additional complex functions may be a consequence of its influence on mRNA expression. Involved in down-regulation of MYB- and JUN-dependent transcription. May play a role in cell differentiation. Can bind oligonucleotides, such as poly-G, poly-C or poly-T (in vitro), but the physiological relevance of this is not certain. Does not bind poly-A. Enhances ligand-dependent transcriptional activity of nuclear hormone receptors, including RARA, expect ESR1-mediated transcription that is not only slightly increased, if at all. The polypeptide is CCR4-NOT transcription complex subunit 9 (Homo sapiens (Human)).